The following is a 536-amino-acid chain: CBS domain-containing protein CBSCBSPB2 (536 aa).

Low complexity predominate over residues 1–23 (MTTTPTSSGRRSISSIRRTSSAS). The tract at residues 1–60 (MTTTPTSSGRRSISSIRRTSSASKKPVLQSEESESGSGSINENTSKPDSPLAQPVSDGER) is disordered. CBS domains are found at residues 66 to 124 (RLSK…LRPE), 132 to 187 (MTRN…RMEK), 228 to 287 (VTEN…LSPE), and 295 to 354 (MTPN…NNSS). One can recognise a PB1 domain in the interval 406-489 (VSSFAFKFED…KVLRLHLDFT (84 aa)). The chain crosses the membrane as a helical span at residues 509 to 529 (VWWQTGVLAGAIVLTSIGLFV).

The protein resides in the membrane. The sequence is that of CBS domain-containing protein CBSCBSPB2 (CBSCBSPB2) from Arabidopsis thaliana (Mouse-ear cress).